Consider the following 72-residue polypeptide: Large ribosomal subunit protein bL28 (72 aa).

This sequence belongs to the bacterial ribosomal protein bL28 family.

The protein is Large ribosomal subunit protein bL28 of Chlorobium phaeobacteroides (strain DSM 266 / SMG 266 / 2430).